Consider the following 103-residue polypeptide: V-type ATP synthase subunit F (103 aa).

The protein belongs to the V-ATPase F subunit family.

Functionally, produces ATP from ADP in the presence of a proton gradient across the membrane. This is V-type ATP synthase subunit F from Clostridium botulinum (strain Alaska E43 / Type E3).